Here is a 933-residue protein sequence, read N- to C-terminus: Clumping factor A (933 aa).

An N-terminal signal peptide occupies residues 1–39 (MNMKKKEKHAIRKKSIGVASVLVGTLIGFGLLSSKEADA). A YSIRK-G/S signaling motif motif is present at residues 9-20 (HAIRKKSIGVAS). 2 disordered regions span residues 34 to 200 (SKEA…SNKD) and 529 to 904 (FNNG…SEDE). A ligand binding A region region spans residues 40–542 (SENSVTQSDS…SGSGDGIDKP (503 aa)). The segment covering 47–65 (SDSASNESKSNDSSSVSAA) has biased composition (low complexity). Over residues 71–105 (TNVSDTKTSSNTNNGETSVAQNPAQQETTQSSSTN) the composition is skewed to polar residues. The segment covering 106 to 132 (ATTEETPVTGEATTTTTNQANTPATTQ) has biased composition (low complexity). Positions 133 to 200 (SSNTNAEELV…PQSTDASNKD (68 aa)) are enriched in polar residues. The span at 547 to 565 (QPDEPGEIEPIPEDSDSDP) shows a compositional bias: acidic residues. Low complexity predominate over residues 566–598 (GSDSGSDSNSDSGSDSGSDSTSDSGSDSASDSD). A compositionally biased stretch (acidic residues) spans 599-861 (SASDSDSASD…DSDSESDSNS (263 aa)). The segment covering 862 to 880 (DSESGSNNNVVPPNSPKNG) has biased composition (low complexity). Residues 887–896 (NEAKDSKEPL) show a composition bias toward basic and acidic residues. The LPXTG sorting signal signature appears at 896-900 (LPDTG). At Thr899 the chain carries Pentaglycyl murein peptidoglycan amidated threonine. Residues 900 to 933 (GSEDEANTSLIWGLLASIGSLLLFRRKKENKDKK) constitute a propeptide, removed by sortase.

The protein belongs to the serine-aspartate repeat-containing protein (SDr) family.

The protein localises to the secreted. The protein resides in the cell wall. Cell surface-associated protein implicated in virulence. Promotes bacterial attachment exclusively to the gamma-chain of human fibrinogen. Induces formation of bacterial clumps, which diminish the ability of group IIA phospholipase A2 to cause bacterial phospholipid hydrolysis and killing. Significantly decreases macrophage phagocytosis possibly thanks to the clumps, clumped bacteria being too large to be phagocytosed. Dominant factor responsible for human platelet aggregation, which may be an important mechanism for initiating infective endocarditis. Enhances spleen cell proliferative response in vitro, contributing significantly to the immunostimulatory activity of S.aureus. The polypeptide is Clumping factor A (clfA) (Staphylococcus aureus (strain Newman)).